The chain runs to 141 residues: Hemoglobin subunit alpha-1 (141 aa).

Residues 1–141 (VLTDAEKKEV…VATVLTSKYR (141 aa)) enclose the Globin domain. O2 is bound at residue histidine 58. Histidine 87 is a heme b binding site.

Belongs to the globin family. In terms of assembly, heterotetramer of two alpha chains and two beta chains. In terms of tissue distribution, red blood cells.

In terms of biological role, involved in oxygen transport from the lung to the various peripheral tissues. The chain is Hemoglobin subunit alpha-1 from Tachyglossus aculeatus aculeatus (Southeast Australian short-beaked echidna).